The primary structure comprises 395 residues: Phosphoglycerate kinase (395 aa).

Substrate is bound by residues 21–23 (DLN), Arg-36, 59–62 (HLGR), Arg-114, and Arg-147. ATP-binding positions include Lys-198, Glu-320, and 346 to 349 (GGDT).

It belongs to the phosphoglycerate kinase family. Monomer.

The protein localises to the cytoplasm. The enzyme catalyses (2R)-3-phosphoglycerate + ATP = (2R)-3-phospho-glyceroyl phosphate + ADP. It functions in the pathway carbohydrate degradation; glycolysis; pyruvate from D-glyceraldehyde 3-phosphate: step 2/5. The chain is Phosphoglycerate kinase from Nitrosospira multiformis (strain ATCC 25196 / NCIMB 11849 / C 71).